Reading from the N-terminus, the 108-residue chain is Flagellar hook-basal body complex protein FliE (108 aa).

It belongs to the FliE family.

It is found in the bacterial flagellum basal body. This Pseudomonas fluorescens (strain ATCC BAA-477 / NRRL B-23932 / Pf-5) protein is Flagellar hook-basal body complex protein FliE.